We begin with the raw amino-acid sequence, 1226 residues long: Methionine synthase (1226 aa).

Residues 7 to 327 (KVQIEKQLSE…EHIRQMALVV (321 aa)) form the Hcy-binding domain. Zn(2+) is bound by residues Cys249, Cys312, and Cys313. The Pterin-binding domain occupies 358-619 (FINVGERTNV…VPEDLREAVE (262 aa)). Residues 652–746 (SALEWRDWPV…FINASKEVGA (95 aa)) enclose the B12-binding N-terminal domain. Residues Glu696, 758 to 762 (GDVHD), His761, Ser806, Thr810, and Ala862 contribute to the methylcob(III)alamin site. Residues 748–883 (NGKILLATVK…SDELKPSFVE (136 aa)) enclose the B12-binding domain. In terms of domain architecture, AdoMet activation spans 899–1226 (KQPRTKPVTL…AEKWLGPNLN (328 aa)). S-adenosyl-L-methionine is bound by residues Asp949, Arg1137, and 1192-1193 (YF).

This sequence belongs to the vitamin-B12 dependent methionine synthase family. Methylcob(III)alamin is required as a cofactor. Zn(2+) serves as cofactor.

The catalysed reaction is (6S)-5-methyl-5,6,7,8-tetrahydrofolate + L-homocysteine = (6S)-5,6,7,8-tetrahydrofolate + L-methionine. Its pathway is amino-acid biosynthesis; L-methionine biosynthesis via de novo pathway; L-methionine from L-homocysteine (MetH route): step 1/1. In terms of biological role, catalyzes the transfer of a methyl group from methyl-cobalamin to homocysteine, yielding enzyme-bound cob(I)alamin and methionine. Subsequently, remethylates the cofactor using methyltetrahydrofolate. The sequence is that of Methionine synthase (metH) from Aliivibrio fischeri (strain ATCC 700601 / ES114) (Vibrio fischeri).